The primary structure comprises 180 residues: Nucleoside triphosphate/diphosphate phosphatase (180 aa).

Arg-26 (proton donor) is an active-site residue. Asn-90, Asp-106, Asp-108, Asp-110, Asp-123, and Glu-126 together coordinate Mg(2+).

The protein belongs to the Ntdp family. Mg(2+) serves as cofactor.

The enzyme catalyses a ribonucleoside 5'-triphosphate + H2O = a ribonucleoside 5'-diphosphate + phosphate + H(+). The catalysed reaction is a ribonucleoside 5'-diphosphate + H2O = a ribonucleoside 5'-phosphate + phosphate + H(+). Has nucleoside phosphatase activity towards nucleoside triphosphates and nucleoside diphosphates. This Staphylococcus aureus (strain MRSA252) protein is Nucleoside triphosphate/diphosphate phosphatase.